A 297-amino-acid chain; its full sequence is DNA processing protein DprA (297 aa).

It belongs to the DprA/Smf family. In terms of assembly, interacts with RecA. Interacts with ComFA and ComFC.

It is found in the cytoplasm. Protein that helps load RecA onto ssDNA during transformation. Binds cooperatively to circular ssDNA, is able to bridge different segments of DNA. Favors the loading of RecA onto SsbA- or SsbB-coated ssDNA and formation of RecA-DNA filaments. RecA-ATP cannot catalyze homologous DNA strand exchange; SsbA and DprA activate strand exchange by RecA-ATP. The polypeptide is DNA processing protein DprA (Bacillus subtilis (strain 168)).